Consider the following 296-residue polypeptide: PYK10-binding protein 2 (296 aa).

Positions 1–20 are disordered; sequence MAQKVEAKGGKGGNQWDDGS. Ala-2 carries the N-acetylalanine modification. 2 consecutive Jacalin-type lectin domains span residues 2–142 and 150–293; these read AQKV…YFAP and AKPL…HVRP.

This sequence belongs to the jacalin lectin family. Component of the PYK10 complex, at least composed of PYK10/BGLU23, BGLU21, BGLU22, JAL22, JAL23, PBP1/JAL30, PBP2/JAL31, JAL32, JAL33, JAL34, JAL35, GLL22 and GLL23.

Its function is as follows. Polymerizer-type lectin that may facilitate the correct polymerization of BGLU23/PYK10 upon tissue damage. Activates BGLU21, BGLU22 and BGLU23. This Arabidopsis thaliana (Mouse-ear cress) protein is PYK10-binding protein 2 (PBP2).